A 540-amino-acid chain; its full sequence is MLFCDDSKKYLKEQNINLKNEFDKDDKRVEKFSLKHQNIYFDYSKNLINDYILKSLLESAEKSSLKDKIKQMFNGAKINSTEHRAVLHTALRDLSSTPLIVDGQDIRQEVTKEKQRVKELVEKVVSGRWRGFSGKKITDIVNIGIGGSDLGPKMVVRALQPYHCTDLKVHFVSNVDADSLLQALHVVDPETTLFIIASKSFSTEETLLNSISAREWLLDHYEDEKAVANHFVAISSKLDKVKEFGIDLEHCYKMWDWVGGRYSLWSSIGMSIAFAIGYDNFEKLLAGAYSVDKHFKETEFSKNIPVIMALLASYYSCTYNSQSQALLPYDERLCYFVDYLQQADMESNGKSVNIAGETVNYQTGVVLWGGVGTNGQHAFHQLLHQGNIFIPVDFIAIATSHHNYDNHQQALLANCFAQSQALMFGQSYDMVYNELLKSGLNETQAKELAAHKVIPGNRPSTTILLDELSPYSLGVLIALYEHKIFVQGVLWDINSYDQWGVELGKKLGKNILKAMNDDSSDEYQNLDDSTRQLIAKVKNK.

Glu346 serves as the catalytic Proton donor. Active-site residues include His377 and Lys505.

This sequence belongs to the GPI family.

It is found in the cytoplasm. It carries out the reaction alpha-D-glucose 6-phosphate = beta-D-fructose 6-phosphate. Its pathway is carbohydrate biosynthesis; gluconeogenesis. The protein operates within carbohydrate degradation; glycolysis; D-glyceraldehyde 3-phosphate and glycerone phosphate from D-glucose: step 2/4. Its function is as follows. Catalyzes the reversible isomerization of glucose-6-phosphate to fructose-6-phosphate. The sequence is that of Glucose-6-phosphate isomerase from Francisella tularensis subsp. tularensis (strain WY96-3418).